Here is a 425-residue protein sequence, read N- to C-terminus: Formyl-CoA:oxalate CoA-transferase (425 aa).

CoA is bound by residues 17–18 (QS), Arg38, 72–75 (LDTK), 96–98 (NFG), Arg104, and 136–139 (KVYE). Asp168 functions as the Nucleophile in the catalytic mechanism. A substrate-binding site is contributed by 247-249 (GGQ).

It belongs to the CoA-transferase III family. Frc subfamily. As to quaternary structure, homodimer.

The enzyme catalyses formyl-CoA + oxalate = oxalyl-CoA + formate. It functions in the pathway metabolic intermediate degradation; oxalate degradation; CO(2) and formate from oxalate: step 1/2. Its function is as follows. Involved in the catabolism of oxalate and in the adapatation to low pH via the induction of the oxalate-dependent acid tolerance response (ATR). Catalyzes the transfer of the CoA moiety from formyl-CoA to oxalate. The protein is Formyl-CoA:oxalate CoA-transferase of Rhodopseudomonas palustris (strain BisA53).